The sequence spans 180 residues: NAD(P)H-quinone oxidoreductase subunit I, chloroplastic (180 aa).

4Fe-4S ferredoxin-type domains lie at 55-84 and 95-124; these read GRIH…VDWR and LNYS…MTEE. [4Fe-4S] cluster contacts are provided by Cys-64, Cys-67, Cys-70, Cys-74, Cys-104, Cys-107, Cys-110, and Cys-114.

This sequence belongs to the complex I 23 kDa subunit family. In terms of assembly, NDH is composed of at least 16 different subunits, 5 of which are encoded in the nucleus. Requires [4Fe-4S] cluster as cofactor.

It localises to the plastid. It is found in the chloroplast thylakoid membrane. The catalysed reaction is a plastoquinone + NADH + (n+1) H(+)(in) = a plastoquinol + NAD(+) + n H(+)(out). It carries out the reaction a plastoquinone + NADPH + (n+1) H(+)(in) = a plastoquinol + NADP(+) + n H(+)(out). NDH shuttles electrons from NAD(P)H:plastoquinone, via FMN and iron-sulfur (Fe-S) centers, to quinones in the photosynthetic chain and possibly in a chloroplast respiratory chain. The immediate electron acceptor for the enzyme in this species is believed to be plastoquinone. Couples the redox reaction to proton translocation, and thus conserves the redox energy in a proton gradient. In Hordeum vulgare (Barley), this protein is NAD(P)H-quinone oxidoreductase subunit I, chloroplastic.